The primary structure comprises 404 residues: Cysteine desulfurase IscS (404 aa).

Residues 75-76 (AT), Asn155, Gln183, and 203-205 (SGH) each bind pyridoxal 5'-phosphate. Lys206 carries the N6-(pyridoxal phosphate)lysine modification. Residue Thr243 participates in pyridoxal 5'-phosphate binding. Residue Cys328 is the Cysteine persulfide intermediate of the active site. Cys328 contacts [2Fe-2S] cluster.

It belongs to the class-V pyridoxal-phosphate-dependent aminotransferase family. NifS/IscS subfamily. Homodimer. Forms a heterotetramer with IscU, interacts with other sulfur acceptors. Pyridoxal 5'-phosphate serves as cofactor.

It is found in the cytoplasm. It catalyses the reaction (sulfur carrier)-H + L-cysteine = (sulfur carrier)-SH + L-alanine. The protein operates within cofactor biosynthesis; iron-sulfur cluster biosynthesis. In terms of biological role, master enzyme that delivers sulfur to a number of partners involved in Fe-S cluster assembly, tRNA modification or cofactor biosynthesis. Catalyzes the removal of elemental sulfur atoms from cysteine to produce alanine. Functions as a sulfur delivery protein for Fe-S cluster synthesis onto IscU, an Fe-S scaffold assembly protein, as well as other S acceptor proteins. The sequence is that of Cysteine desulfurase IscS from Actinobacillus succinogenes (strain ATCC 55618 / DSM 22257 / CCUG 43843 / 130Z).